The primary structure comprises 180 residues: MKKNYSYKNIQAIDFTNLNDGEKLLVLEFRNHPNTALWMYSTFISLKTHLQFIEDLKNSPNHRYFLFKEEGVYLGVGSITKINFFHKHGYLGIYKNPFLKNGGETILKALEFIAFEEFQLHSLHLEVMENNFKAIAFYEKNHYELEGRLKGFISKDKEFIDVLLYYKDKKGYNDQSLLKL.

Residues 13–169 (IDFTNLNDGE…IDVLLYYKDK (157 aa)) form the N-acetyltransferase domain.

The enzyme catalyses UDP-4-amino-4,6-dideoxy-N-acetyl-beta-L-altrosamine + acetyl-CoA = UDP-2,4-diacetamido-2,4,6-trideoxy-beta-L-altrose + CoA + H(+). Functionally, catalyzes the third step in the biosynthesis of pseudaminic acid, a sialic-acid-like sugar that is used to modify flagellin. Mediates N-4 acetylation of UDP-4-amino-4,6-dideoxy-beta-L-AltNAc to form UDP-2,4-diacetamido-2,4,6-trideoxy-beta-L-altropyranose. In Helicobacter pylori (strain ATCC 700392 / 26695) (Campylobacter pylori), this protein is UDP-4-amino-4,6-dideoxy-N-acetyl-beta-L-altrosamine N-acetyltransferase (pseH).